A 231-amino-acid chain; its full sequence is Dephospho-CoA kinase domain-containing protein (231 aa).

The 205-residue stretch at 3–207 folds into the DPCK domain; it reads LVGLTGGIAS…RSLEYLPLRF (205 aa). 8–15 serves as a coordination point for ATP; that stretch reads GGIASGKS.

Belongs to the CoaE family.

The protein is Dephospho-CoA kinase domain-containing protein (DCAKD) of Homo sapiens (Human).